We begin with the raw amino-acid sequence, 996 residues long: Disabled homolog 2-interacting protein (996 aa).

The C2 domain maps to 1–118 (MENLRRAVHP…AGRQFVEKWY (118 aa)). Residues 194–402 (GKVKDFLTDL…TNMQRFLLEI (209 aa)) enclose the Ras-GAP domain. The interval 453–750 (LRDVHTALST…RTPPTMLSTL (298 aa)) is necessary for interaction with AKT1. Residues 460 to 475 (LSTPGSGQLPGTNDLA) show a composition bias toward polar residues. Disordered stretches follow at residues 460 to 486 (LSTP…SSVS) and 522 to 545 (RSSG…PDLQ). The span at 476-486 (STPGSGSSSVS) shows a compositional bias: low complexity. The span at 522 to 538 (RSSGVQPSPARSSSYSE) shows a compositional bias: polar residues. Serine 535 carries the phosphoserine; by MAP3K5 and RIPK1 modification. Serine 554 is modified (phosphoserine). Disordered stretches follow at residues 611–630 (VPTP…PQLL), 650–672 (PRGL…NSEE), 702–805 (SLTE…SPNA), 822–841 (EDEG…SKEE), and 971–996 (RNGV…SSNC). The span at 659–672 (EGHSSLSSHSNSEE) shows a compositional bias: low complexity. The segment covering 726–738 (QPPPPPPPPPPAP) has biased composition (pro residues). 2 stretches are compositionally biased toward polar residues: residues 746–762 (MLST…TLAS) and 774–783 (LRQQSSSSKG). 2 positions are modified to phosphoserine: serine 785 and serine 802. A compositionally biased stretch (basic and acidic residues) spans 830-841 (PPHRDRLRSKEE). The stretch at 832-966 (HRDRLRSKEE…SALTQLKERY (135 aa)) forms a coiled coil. Positions 974 to 996 (VSPTNPTKLQITENGEFRNSSNC) are enriched in polar residues.

On plasma membrane, exists in an inactive form complexed with TNFR1; in response to TNF-alpha, dissociates from TNFR1 complex, translocates to cytoplasm and forms part of an intracellular signaling complex comprising TRADD, RIPK1, TRAF2 and MAP3K5. Interacts (via NPXY motif) with DAB2 (via PID domain). Interacts (via PH domain) with ERN1. Part of a cytoplasmic complex made of HIPK1, DAB2IP and MAP3K5 in response to TNF-alpha; this complex formation promotes MAP3K5-JNK activation and subsequent apoptosis. Interacts (via N-terminal domain) with JAK2; the interaction occurs in a IFNG/IFN-gamma-dependent manner and inhibits JAK2 autophosphorylation activity. Interacts (via C2 domain) with GSK3B; the interaction stimulates GSK3B kinase activation. Interacts (via C2 domain) with PPP2CA. Interacts (via proline-rich motif) with a regulatory p85 subunit (via SH3 domain) of the PI3K complex; the interaction inhibits the PI3K-AKT complex activity in a TNF-alpha-dependent manner in prostate cancer (PCa) cells. Interacts with AKT1; the interaction is increased in a TNF-alpha-induced manner. Interacts (via C2 domain and active form preferentially) with KDR/VEGFR2 (tyrosine-phosphorylated active form preferentially); the interaction occurs at the late phase of VEGFA response and inhibits KDR/VEGFR2 activity. Interacts (via N-terminus C2 domain) with MAP3K5 ('Ser-966' dephosphorylated form preferentially); the interaction occurs in a TNF-alpha-induced manner. Interacts (via Ras-GAP domain) with the catalytic subunit of protein phosphatase PP2A; the interaction occurs in resting endothelial cells, is further enhanced by TNF-alpha stimulation and is required to bridge PP2A to MAP3K5. Interacts (via C-terminus PER domain) with TRAF2 (via zinc fingers); the interaction occurs in a TNF-alpha-dependent manner. Interacts with 14-3-3 proteins; the interaction occurs in a TNF-alpha-dependent manner. Interacts (via Ras-GAP domain) with RIPK1 (via kinase domain); the interaction occurs in a TNF-alpha-dependent manner. Interacts with DAB1 and DAB2. Interacts with RAB40C; acts as a GAP for RAB40C. In response to TNF-alpha-induction, phosphorylated at Ser-535; phosphorylation leads to a conformational change, and thus, increases its association with 14-3-3 proteins, MAP3K5, RIPK1 and TRAF2 in endothelial cells; also stimulates regulatory p85 subunit sequestring and PI3K-p85 complex activity inhibition. As to expression, expressed in brain, lung, thymus, bladder and skeletal muscle. Up-regulatedd during prostate degeneration.

Its subcellular location is the cytoplasm. The protein resides in the cell membrane. The protein localises to the membrane. It localises to the cell projection. It is found in the dendrite. In terms of biological role, functions as a scaffold protein implicated in the regulation of a large spectrum of both general and specialized signaling pathways. Involved in several processes such as innate immune response, inflammation and cell growth inhibition, apoptosis, cell survival, angiogenesis, cell migration and maturation. Also plays a role in cell cycle checkpoint control; reduces G1 phase cyclin levels resulting in G0/G1 cell cycle arrest. Mediates signal transduction by receptor-mediated inflammatory signals, such as the tumor necrosis factor (TNF), interferon (IFN) or lipopolysaccharide (LPS). Modulates the balance between phosphatidylinositol 3-kinase (PI3K)-AKT-mediated cell survival and apoptosis stimulated kinase (MAP3K5)-JNK signaling pathways; sequesters both AKT1 and MAP3K5 and counterbalances the activity of each kinase by modulating their phosphorylation status in response to pro-inflammatory stimuli. Acts as a regulator of the endoplasmic reticulum (ER) unfolded protein response (UPR) pathway; specifically involved in transduction of the ER stress-response to the JNK cascade through ERN1. Mediates TNF-alpha-induced apoptosis activation by facilitating dissociation of inhibitor 14-3-3 from MAP3K5; recruits the PP2A phosphatase complex which dephosphorylates MAP3K5 on 'Ser-966', leading to the dissociation of 13-3-3 proteins and activation of the MAP3K5-JNK signaling pathway in endothelial cells. Acts a negative regulator in the IFN-gamma-mediated JAK-STAT signaling cascade by inhibiting smooth muscle cell (VSMCs) proliferation and intimal expansion, and thus, prevents graft arteriosclerosis (GA). Acts as a GTPase-activating protein (GAP) for the ADP ribosylation factor 6 (ARF6). Promotes hydrolysis of the ARF6-bound GTP and thus, negatively regulates phosphatidylinositol 4,5-bisphosphate (PIP2)-dependent TLR4-TIRAP-MyD88 and NF-kappa-B signaling pathways in endothelial cells in response to lipopolysaccharides (LPS). Binds specifically to phosphatidylinositol 4-phosphate (PtdIns4P) and phosphatidylinositol 3-phosphate (PtdIns3P). In response to vascular endothelial growth factor (VEGFA), acts as a negative regulator of the VEGFR2-PI3K-mediated angiogenic signaling pathway by inhibiting endothelial cell migration and tube formation. In the developing brain, promotes both the transition from the multipolar to the bipolar stage and the radial migration of cortical neurons from the ventricular zone toward the superficial layer of the neocortex in a glial-dependent locomotion process. Probable downstream effector of the Reelin signaling pathway; promotes Purkinje cell (PC) dendrites development and formation of cerebellar synapses. Also functions as a tumor suppressor protein in prostate cancer progression; prevents cell proliferation and epithelial-to-mesenchymal transition (EMT) through activation of the glycogen synthase kinase-3 beta (GSK3B)-induced beta-catenin and inhibition of PI3K-AKT and Ras-MAPK survival downstream signaling cascades, respectively. Mediates TNF/TRAF2-induced MAP3K5-JNK activation, while it inhibits CHUK-NF-kappa-B signaling. Functions as a Ras GTPase-activating protein. May act as a tumor suppressor gene. The sequence is that of Disabled homolog 2-interacting protein (Dab2ip) from Rattus norvegicus (Rat).